Consider the following 468-residue polypeptide: 6-phospho-beta-galactosidase (468 aa).

5 residues coordinate D-galactose 6-phosphate: Q19, H116, N159, E160, and N297. The active-site Proton donor is the E160. Residue E375 is the Nucleophile of the active site. D-galactose 6-phosphate contacts are provided by S428, W429, K435, and Y437.

It belongs to the glycosyl hydrolase 1 family.

The catalysed reaction is a 6-phospho-beta-D-galactoside + H2O = D-galactose 6-phosphate + an alcohol. The protein operates within carbohydrate metabolism; lactose degradation; D-galactose 6-phosphate and beta-D-glucose from lactose 6-phosphate: step 1/1. This Streptococcus pyogenes serotype M12 (strain MGAS2096) protein is 6-phospho-beta-galactosidase.